The following is a 95-amino-acid chain: Progonadoliberin-1 (95 aa).

A signal peptide spans 1–25 (MAPQTSNLWILLLLVVVMMMSQGCC). At glutamine 26 the chain carries Pyrrolidone carboxylic acid. Glycine 35 bears the Glycine amide mark.

This sequence belongs to the GnRH family.

The protein localises to the secreted. In terms of biological role, stimulates the secretion of gonadotropins. This chain is Progonadoliberin-1 (gnrh1), found in Sparus aurata (Gilthead sea bream).